We begin with the raw amino-acid sequence, 447 residues long: Probable glycine dehydrogenase (decarboxylating) subunit 1 (447 aa).

It belongs to the GcvP family. N-terminal subunit subfamily. The glycine cleavage system is composed of four proteins: P, T, L and H. In this organism, the P 'protein' is a heterodimer of two subunits.

It catalyses the reaction N(6)-[(R)-lipoyl]-L-lysyl-[glycine-cleavage complex H protein] + glycine + H(+) = N(6)-[(R)-S(8)-aminomethyldihydrolipoyl]-L-lysyl-[glycine-cleavage complex H protein] + CO2. Its function is as follows. The glycine cleavage system catalyzes the degradation of glycine. The P protein binds the alpha-amino group of glycine through its pyridoxal phosphate cofactor; CO(2) is released and the remaining methylamine moiety is then transferred to the lipoamide cofactor of the H protein. This chain is Probable glycine dehydrogenase (decarboxylating) subunit 1, found in Beijerinckia indica subsp. indica (strain ATCC 9039 / DSM 1715 / NCIMB 8712).